The chain runs to 513 residues: UDP-N-acetylmuramyl-tripeptide synthetase (513 aa).

Ser38 lines the UDP-N-acetyl-alpha-D-muramoyl-L-alanyl-D-glutamate pocket. 115 to 121 contacts ATP; sequence GTKGKTT. Residues 161–162, Ser188, and Arg196 each bind UDP-N-acetyl-alpha-D-muramoyl-L-alanyl-D-glutamate; that span reads TT. Residue Lys230 is modified to N6-carboxylysine.

This sequence belongs to the MurCDEF family. MurE subfamily. Carboxylation is probably crucial for Mg(2+) binding and, consequently, for the gamma-phosphate positioning of ATP.

It localises to the cytoplasm. The protein operates within cell wall biogenesis; peptidoglycan biosynthesis. In terms of biological role, catalyzes the addition of an amino acid to the nucleotide precursor UDP-N-acetylmuramoyl-L-alanyl-D-glutamate (UMAG) in the biosynthesis of bacterial cell-wall peptidoglycan. The chain is UDP-N-acetylmuramyl-tripeptide synthetase from Latilactobacillus sakei subsp. sakei (strain 23K) (Lactobacillus sakei subsp. sakei).